A 557-amino-acid polypeptide reads, in one-letter code: CCR4-NOT transcription complex subunit 6 (557 aa).

LRR repeat units lie at residues 52-73, 75-96, 98-120, and 121-143; these read HLTA…IAKL, NLVY…LGNM, SLRE…GKLF, and QLQT…CLEP. Positions 153-557 are nuclease domain; the sequence is LLDNLSGTAK…VNGIHLPGRR (405 aa). Glu-240 is a binding site for Mg(2+). 4 residues coordinate substrate: Glu-240, Glu-276, His-361, and Pro-366. Residue Asp-412 participates in Mg(2+) binding. Asp-412 acts as the Proton donor/acceptor in catalysis. 3 residues coordinate substrate: Asn-414, Asn-481, and Phe-486.

This sequence belongs to the CCR4/nocturin family. As to quaternary structure, component of the CCR4-NOT complex; distinct complexes seem to exist that differ in the participation of probably mutually exclusive catalytic subunits; the complex contains two deadenylase subunits, CNOT6 or CNOT6L, and CNOT7 or CNOT8. Interacts with CNOT7 and CNOT8. Interacts with UNR. Interacts with ZFP36L1 (via N-terminus). Interacts with ZNF335. Mg(2+) serves as cofactor.

The protein resides in the cytoplasm. It localises to the nucleus. It catalyses the reaction Exonucleolytic cleavage of poly(A) to 5'-AMP.. Its function is as follows. Poly(A) nuclease with 3'-5' RNase activity. Catalytic component of the CCR4-NOT complex which is one of the major cellular mRNA deadenylases and is linked to various cellular processes including bulk mRNA degradation, miRNA-mediated repression, translational repression during translational initiation and general transcription regulation. Additional complex functions may be a consequence of its influence on mRNA expression. Involved in mRNA decay mediated by the major-protein-coding determinant of instability (mCRD) of the FOS gene in the cytoplasm. In the presence of ZNF335, enhances ligand-dependent transcriptional activity of nuclear hormone receptors. Mediates cell proliferation and cell survival and prevents cellular senescence. The protein is CCR4-NOT transcription complex subunit 6 (Cnot6) of Mus musculus (Mouse).